We begin with the raw amino-acid sequence, 549 residues long: Glucose-6-phosphate isomerase (549 aa).

An N6-acetyllysine mark is found at Lys-80, Lys-228, and Lys-234. Residue Glu-355 is the Proton donor of the active site. Catalysis depends on residues His-386 and Lys-514.

It belongs to the GPI family.

The protein resides in the cytoplasm. The enzyme catalyses alpha-D-glucose 6-phosphate = beta-D-fructose 6-phosphate. It participates in carbohydrate biosynthesis; gluconeogenesis. It functions in the pathway carbohydrate degradation; glycolysis; D-glyceraldehyde 3-phosphate and glycerone phosphate from D-glucose: step 2/4. Catalyzes the reversible isomerization of glucose-6-phosphate to fructose-6-phosphate. The chain is Glucose-6-phosphate isomerase from Escherichia coli O139:H28 (strain E24377A / ETEC).